The chain runs to 440 residues: Xylose isomerase (440 aa).

Active-site residues include histidine 101 and aspartate 104. The Mg(2+) site is built by glutamate 232, glutamate 268, histidine 271, aspartate 296, aspartate 307, aspartate 309, and aspartate 339.

This sequence belongs to the xylose isomerase family. In terms of assembly, homotetramer. Mg(2+) serves as cofactor.

Its subcellular location is the cytoplasm. It carries out the reaction alpha-D-xylose = alpha-D-xylulofuranose. The sequence is that of Xylose isomerase from Salmonella paratyphi B (strain ATCC BAA-1250 / SPB7).